Consider the following 179-residue polypeptide: Large ribosomal subunit protein uL5 (179 aa).

It belongs to the universal ribosomal protein uL5 family. Part of the 50S ribosomal subunit; part of the 5S rRNA/L5/L18/L25 subcomplex. Contacts the 5S rRNA and the P site tRNA. Forms a bridge to the 30S subunit in the 70S ribosome.

This is one of the proteins that bind and probably mediate the attachment of the 5S RNA into the large ribosomal subunit, where it forms part of the central protuberance. In the 70S ribosome it contacts protein S13 of the 30S subunit (bridge B1b), connecting the 2 subunits; this bridge is implicated in subunit movement. Contacts the P site tRNA; the 5S rRNA and some of its associated proteins might help stabilize positioning of ribosome-bound tRNAs. This is Large ribosomal subunit protein uL5 from Synechococcus sp. (strain CC9605).